We begin with the raw amino-acid sequence, 88 residues long: HssA/B-like protein 61 (88 aa).

Belongs to the hssA/B family.

The polypeptide is HssA/B-like protein 61 (hssl61) (Dictyostelium discoideum (Social amoeba)).